A 176-amino-acid chain; its full sequence is Probable non-specific lipid-transfer protein 1 (176 aa).

Positions 1–37 are cleaved as a signal peptide; the sequence is MRTVSAPSAVALVVIVAAGLAWTSLASVAPPAPAPGS. 4 disulfides stabilise this stretch: cysteine 41/cysteine 89, cysteine 51/cysteine 66, cysteine 67/cysteine 112, and cysteine 87/cysteine 128. Residues 139–176 are disordered; that stretch reads QLPVSLRHGPVTGPSDPAHKARLERPQIRVPPPAPEKA. Over residues 155–165 the composition is skewed to basic and acidic residues; sequence PAHKARLERPQ. Positions 167–176 are enriched in pro residues; that stretch reads RVPPPAPEKA.

This sequence belongs to the plant LTP family.

In terms of biological role, plant non-specific lipid-transfer proteins transfer phospholipids as well as galactolipids across membranes. May play a role in wax or cutin deposition in the cell walls of expanding epidermal cells and certain secretory tissues. This is Probable non-specific lipid-transfer protein 1 from Parietaria judaica (Pellitory-of-the-wall).